The following is a 292-amino-acid chain: Elongation factor Ts (292 aa).

The involved in Mg(2+) ion dislocation from EF-Tu stretch occupies residues 79–82 (TDFV).

Belongs to the EF-Ts family.

The protein localises to the cytoplasm. Associates with the EF-Tu.GDP complex and induces the exchange of GDP to GTP. It remains bound to the aminoacyl-tRNA.EF-Tu.GTP complex up to the GTP hydrolysis stage on the ribosome. The polypeptide is Elongation factor Ts (Staphylococcus epidermidis (strain ATCC 12228 / FDA PCI 1200)).